The sequence spans 241 residues: Major prion protein (241 aa).

The signal sequence occupies residues 1 to 15 (MLVLFVATWSDLGLC). The segment at 16–31 (KKRPKPGGWNTGGSRY) is interaction with ADGRG6. Positions 16 to 223 (KKRPKPGGWN…ESQAYYQRGS (208 aa)) are interaction with GRB2, ERI3 and SYN1. A disordered region spans residues 18–100 (RPKPGGWNTG…QWNKPSKPKT (83 aa)). 5 consecutive repeat copies span residues 44 to 52 (PQGGGSWGQ), 53 to 60 (PHGGGWGQ), 61 to 68 (PHGGGWGQ), 69 to 76 (PHGGGWGQ), and 77 to 84 (PHGGGWGQ). Residues 44–84 (PQGGGSWGQPHGGGWGQPHGGGWGQPHGGGWGQPHGGGWGQ) are 5 X 8 AA tandem repeats of P-H-G-G-G-W-G-Q. A compositionally biased stretch (gly residues) spans 45 to 88 (QGGGSWGQPHGGGWGQPHGGGWGQPHGGGWGQPHGGGWGQGGGT). Positions 54, 55, 56, 62, 63, 64, 70, 71, 72, 78, 79, and 80 each coordinate Cu(2+). C172 and C207 are disulfide-bonded. N-linked (GlcNAc...) asparagine glycosylation is found at N174 and N190. S223 carries GPI-anchor amidated serine lipidation. A propeptide spans 224–241 (SMVLFSSPPVILLISFLI) (removed in mature form).

The protein belongs to the prion family. Monomer and homodimer. Has a tendency to aggregate into amyloid fibrils containing a cross-beta spine, formed by a steric zipper of superposed beta-strands. Soluble oligomers may represent an intermediate stage on the path to fibril formation. Copper binding may promote oligomerization. Interacts with GRB2, APP, ERI3/PRNPIP and SYN1. Mislocalized cytosolically exposed PrP interacts with MGRN1; this interaction alters MGRN1 subcellular location and causes lysosomal enlargement. Interacts with APP. Interacts with KIAA1191. Interacts with ADGRG6.

The protein resides in the cell membrane. Its subcellular location is the golgi apparatus. Functionally, its primary physiological function is unclear. May play a role in neuronal development and synaptic plasticity. May be required for neuronal myelin sheath maintenance. May promote myelin homeostasis through acting as an agonist for ADGRG6 receptor. May play a role in iron uptake and iron homeostasis. Soluble oligomers are toxic to cultured neuroblastoma cells and induce apoptosis (in vitro). Association with GPC1 (via its heparan sulfate chains) targets PRNP to lipid rafts. Also provides Cu(2+) or Zn(2+) for the ascorbate-mediated GPC1 deaminase degradation of its heparan sulfate side chains. The sequence is that of Major prion protein (PRNP) from Plecturocebus moloch (Dusky titi monkey).